The primary structure comprises 447 residues: Ribulose bisphosphate carboxylase large chain (447 aa).

Substrate contacts are provided by N89 and T139. K141 serves as the catalytic Proton acceptor. K143 provides a ligand contact to substrate. Positions 167, 169, and 170 each coordinate Mg(2+). K167 is subject to N6-carboxylysine. Catalysis depends on H260, which acts as the Proton acceptor. Substrate contacts are provided by R261, H293, and S345.

Belongs to the RuBisCO large chain family. Type I subfamily. In terms of assembly, heterohexadecamer of 8 large chains and 8 small chains; disulfide-linked. The disulfide link is formed within the large subunit homodimers. Requires Mg(2+) as cofactor. In terms of processing, the disulfide bond which can form in the large chain dimeric partners within the hexadecamer appears to be associated with oxidative stress and protein turnover.

The protein localises to the plastid. The protein resides in the chloroplast. The catalysed reaction is 2 (2R)-3-phosphoglycerate + 2 H(+) = D-ribulose 1,5-bisphosphate + CO2 + H2O. It carries out the reaction D-ribulose 1,5-bisphosphate + O2 = 2-phosphoglycolate + (2R)-3-phosphoglycerate + 2 H(+). Its function is as follows. RuBisCO catalyzes two reactions: the carboxylation of D-ribulose 1,5-bisphosphate, the primary event in carbon dioxide fixation, as well as the oxidative fragmentation of the pentose substrate in the photorespiration process. Both reactions occur simultaneously and in competition at the same active site. The protein is Ribulose bisphosphate carboxylase large chain of Convolvulus tricolor (Dwarf morning glory).